We begin with the raw amino-acid sequence, 462 residues long: Light-independent protochlorophyllide reductase subunit N (462 aa).

The [4Fe-4S] cluster site is built by cysteine 24, cysteine 49, and cysteine 109.

It belongs to the BchN/ChlN family. As to quaternary structure, protochlorophyllide reductase is composed of three subunits; ChlL, ChlN and ChlB. Forms a heterotetramer of two ChlB and two ChlN subunits. [4Fe-4S] cluster serves as cofactor.

It localises to the plastid. The protein localises to the chloroplast. The catalysed reaction is chlorophyllide a + oxidized 2[4Fe-4S]-[ferredoxin] + 2 ADP + 2 phosphate = protochlorophyllide a + reduced 2[4Fe-4S]-[ferredoxin] + 2 ATP + 2 H2O. Its pathway is porphyrin-containing compound metabolism; chlorophyll biosynthesis (light-independent). In terms of biological role, component of the dark-operative protochlorophyllide reductase (DPOR) that uses Mg-ATP and reduced ferredoxin to reduce ring D of protochlorophyllide (Pchlide) to form chlorophyllide a (Chlide). This reaction is light-independent. The NB-protein (ChlN-ChlB) is the catalytic component of the complex. This is Light-independent protochlorophyllide reductase subunit N from Pleurastrum terricola (Filamentous green alga).